We begin with the raw amino-acid sequence, 286 residues long: NH(3)-dependent NAD(+) synthetase (286 aa).

51–58 (GISGGVDS) contacts ATP. Position 57 (aspartate 57) interacts with Mg(2+). Residue arginine 148 participates in deamido-NAD(+) binding. An ATP-binding site is contributed by threonine 168. Glutamate 173 is a binding site for Mg(2+). Residues lysine 181 and aspartate 188 each contribute to the deamido-NAD(+) site. Positions 197 and 219 each coordinate ATP. 268–269 (HK) contributes to the deamido-NAD(+) binding site.

Belongs to the NAD synthetase family. As to quaternary structure, homodimer.

It carries out the reaction deamido-NAD(+) + NH4(+) + ATP = AMP + diphosphate + NAD(+) + H(+). It participates in cofactor biosynthesis; NAD(+) biosynthesis; NAD(+) from deamido-NAD(+) (ammonia route): step 1/1. Catalyzes the ATP-dependent amidation of deamido-NAD to form NAD. Uses ammonia as a nitrogen source. This chain is NH(3)-dependent NAD(+) synthetase, found in Paraburkholderia phytofirmans (strain DSM 17436 / LMG 22146 / PsJN) (Burkholderia phytofirmans).